We begin with the raw amino-acid sequence, 461 residues long: tRNA modification GTPase MnmE (461 aa).

Arginine 23, glutamate 88, and arginine 127 together coordinate (6S)-5-formyl-5,6,7,8-tetrahydrofolate. One can recognise a TrmE-type G domain in the interval 223 to 382; sequence GLSTVIVGKP…IEDALAEMVY (160 aa). K(+) is bound at residue asparagine 233. GTP-binding positions include 233–238, 252–258, and 277–280; these read NVGKSS, TDVPGTT, and DTAG. Serine 237 is a binding site for Mg(2+). K(+) is bound by residues threonine 252, valine 254, and threonine 257. Threonine 258 is a Mg(2+) binding site. Lysine 461 is a (6S)-5-formyl-5,6,7,8-tetrahydrofolate binding site.

It belongs to the TRAFAC class TrmE-Era-EngA-EngB-Septin-like GTPase superfamily. TrmE GTPase family. As to quaternary structure, homodimer. Heterotetramer of two MnmE and two MnmG subunits. The cofactor is K(+).

It is found in the cytoplasm. Its function is as follows. Exhibits a very high intrinsic GTPase hydrolysis rate. Involved in the addition of a carboxymethylaminomethyl (cmnm) group at the wobble position (U34) of certain tRNAs, forming tRNA-cmnm(5)s(2)U34. This chain is tRNA modification GTPase MnmE, found in Alkaliphilus oremlandii (strain OhILAs) (Clostridium oremlandii (strain OhILAs)).